A 281-amino-acid chain; its full sequence is Arabinose operon regulatory protein (281 aa).

Residues proline 8, threonine 24, arginine 38, tyrosine 82, and histidine 93 each coordinate alpha-L-arabinopyanose. The region spanning 180 to 279 is the HTH araC/xylS-type domain; the sequence is RDACQYISDH…GASPSEFRAG (100 aa). 2 consecutive DNA-binding regions (H-T-H motif) follow at residues 198-219 and 246-269; these read ASVA…RQQL and IATV…KKCT.

As to quaternary structure, homodimer.

It is found in the cytoplasm. Its function is as follows. Transcription factor that regulates the expression of several genes involved in the transport and metabolism of L-arabinose. The polypeptide is Arabinose operon regulatory protein (Salmonella typhimurium (strain LT2 / SGSC1412 / ATCC 700720)).